The following is a 207-amino-acid chain: Urease accessory protein UreG (207 aa).

GTP is bound at residue 13–20 (GPVGSGKT).

It belongs to the SIMIBI class G3E GTPase family. UreG subfamily. In terms of assembly, homodimer. UreD, UreF and UreG form a complex that acts as a GTP-hydrolysis-dependent molecular chaperone, activating the urease apoprotein by helping to assemble the nickel containing metallocenter of UreC. The UreE protein probably delivers the nickel.

It is found in the cytoplasm. In terms of biological role, facilitates the functional incorporation of the urease nickel metallocenter. This process requires GTP hydrolysis, probably effectuated by UreG. The polypeptide is Urease accessory protein UreG (Azoarcus sp. (strain BH72)).